Here is a 143-residue protein sequence, read N- to C-terminus: Dehydrin DHN2 (143 aa).

Residues 1–10 (MEYQGQTGHA) are compositionally biased toward polar residues. The tract at residues 1-143 (MEYQGQTGHA…IKEKLPGGQH (143 aa)) is disordered. Residues 24–34 (GHGGATGGPTG) are compositionally biased toward gly residues. Over residues 35 to 46 (THGAAAAAAGTG) the composition is skewed to low complexity. The segment covering 51–61 (TRDDHKTDGVL) has biased composition (basic and acidic residues). The segment covering 62 to 71 (RRSGSSSSSS) has biased composition (low complexity). Positions 86-101 (KEKIKEKLPGGAHKDA) are enriched in basic and acidic residues. Low complexity predominate over residues 109–123 (AAGEYAGTGTHGAEA). Residues 124–143 (TGEKKGVMDKIKEKLPGGQH) are compositionally biased toward basic and acidic residues.

Belongs to the plant dehydrin family.

This chain is Dehydrin DHN2 (DHN2), found in Hordeum vulgare (Barley).